The primary structure comprises 361 residues: Phospho-N-acetylmuramoyl-pentapeptide-transferase (361 aa).

10 helical membrane-spanning segments follow: residues 28–48, 74–94, 99–119, 133–153, 168–188, 203–223, 236–256, 263–283, 288–308, and 338–358; these read LAII…IKFL, TMGG…LADL, TWIT…DDYA, SKLL…EYLD, LSLD…VGSS, VPIA…GNLI, TGEL…FLWF, VFMG…ISVI, IVLA…ILQV, and KVVI…LSSL.

The protein belongs to the glycosyltransferase 4 family. MraY subfamily. Requires Mg(2+) as cofactor.

It is found in the cell inner membrane. It carries out the reaction UDP-N-acetyl-alpha-D-muramoyl-L-alanyl-gamma-D-glutamyl-meso-2,6-diaminopimeloyl-D-alanyl-D-alanine + di-trans,octa-cis-undecaprenyl phosphate = di-trans,octa-cis-undecaprenyl diphospho-N-acetyl-alpha-D-muramoyl-L-alanyl-D-glutamyl-meso-2,6-diaminopimeloyl-D-alanyl-D-alanine + UMP. The protein operates within cell wall biogenesis; peptidoglycan biosynthesis. Its function is as follows. Catalyzes the initial step of the lipid cycle reactions in the biosynthesis of the cell wall peptidoglycan: transfers peptidoglycan precursor phospho-MurNAc-pentapeptide from UDP-MurNAc-pentapeptide onto the lipid carrier undecaprenyl phosphate, yielding undecaprenyl-pyrophosphoryl-MurNAc-pentapeptide, known as lipid I. The polypeptide is Phospho-N-acetylmuramoyl-pentapeptide-transferase (Rickettsia massiliae (strain Mtu5)).